A 455-amino-acid chain; its full sequence is Probable Xaa-Pro aminopeptidase GSTUM_00008071001 (455 aa).

The Mn(2+) site is built by D251, D262, E386, and E426.

The protein belongs to the peptidase M24B family. Requires Mn(2+) as cofactor.

The catalysed reaction is Release of any N-terminal amino acid, including proline, that is linked to proline, even from a dipeptide or tripeptide.. Functionally, catalyzes the removal of a penultimate prolyl residue from the N-termini of peptides. The polypeptide is Probable Xaa-Pro aminopeptidase GSTUM_00008071001 (Tuber melanosporum (strain Mel28) (Perigord black truffle)).